The chain runs to 27 residues: Endoglucanase gh5 (27 aa).

Residue Glu6 is the Nucleophile of the active site.

It catalyses the reaction Endohydrolysis of (1-&gt;4)-beta-D-glucosidic linkages in cellulose, lichenin and cereal beta-D-glucans.. With respect to regulation, activity is stimulated by zinc ions, potassium ions and DTT. Activity is inhibited by manganese and chloride ions. Functionally, endoglucanase (EG) that cleaves the internal beta-1,4-glucosidic bonds in cellulose. This is Endoglucanase gh5 from Fomes meliae (Fomitopsis meliae).